Consider the following 95-residue polypeptide: Small ribosomal subunit protein uS15 (95 aa).

This sequence belongs to the universal ribosomal protein uS15 family. As to quaternary structure, part of the 30S ribosomal subunit. Forms a bridge to the 50S subunit in the 70S ribosome, contacting the 23S rRNA.

Functionally, one of the primary rRNA binding proteins, it binds directly to 16S rRNA where it helps nucleate assembly of the platform of the 30S subunit by binding and bridging several RNA helices of the 16S rRNA. In terms of biological role, forms an intersubunit bridge (bridge B4) with the 23S rRNA of the 50S subunit in the ribosome. This is Small ribosomal subunit protein uS15 from Streptomyces avermitilis (strain ATCC 31267 / DSM 46492 / JCM 5070 / NBRC 14893 / NCIMB 12804 / NRRL 8165 / MA-4680).